The primary structure comprises 150 residues: 1,4-dihydroxy-2-naphthoyl-CoA hydrolase (150 aa).

Asp22 is a catalytic residue.

Belongs to the 4-hydroxybenzoyl-CoA thioesterase family. DHNA-CoA hydrolase subfamily.

The catalysed reaction is 1,4-dihydroxy-2-naphthoyl-CoA + H2O = 1,4-dihydroxy-2-naphthoate + CoA + H(+). The protein operates within cofactor biosynthesis; phylloquinone biosynthesis. It functions in the pathway quinol/quinone metabolism; 1,4-dihydroxy-2-naphthoate biosynthesis; 1,4-dihydroxy-2-naphthoate from chorismate: step 7/7. Its function is as follows. Catalyzes the hydrolysis of 1,4-dihydroxy-2-naphthoyl-CoA (DHNA-CoA) to 1,4-dihydroxy-2-naphthoate (DHNA), a reaction involved in phylloquinone (vitamin K1) biosynthesis. In Prochlorococcus marinus (strain NATL1A), this protein is 1,4-dihydroxy-2-naphthoyl-CoA hydrolase.